The sequence spans 420 residues: tRNA(Ile)-lysidine synthase (420 aa).

Residue 28–33 participates in ATP binding; that stretch reads SGGLDS.

This sequence belongs to the tRNA(Ile)-lysidine synthase family.

It localises to the cytoplasm. It carries out the reaction cytidine(34) in tRNA(Ile2) + L-lysine + ATP = lysidine(34) in tRNA(Ile2) + AMP + diphosphate + H(+). Functionally, ligates lysine onto the cytidine present at position 34 of the AUA codon-specific tRNA(Ile) that contains the anticodon CAU, in an ATP-dependent manner. Cytidine is converted to lysidine, thus changing the amino acid specificity of the tRNA from methionine to isoleucine. The chain is tRNA(Ile)-lysidine synthase from Hydrogenovibrio crunogenus (strain DSM 25203 / XCL-2) (Thiomicrospira crunogena).